Consider the following 507-residue polypeptide: Keratin, type II cuticular Hb5 (507 aa).

A head region spans residues 1–123 (MSCRSYRISP…PNAQCVKYEE (123 aa)). The IF rod domain maps to 123–434 (EKEQIKCLNS…RLLEGEEQRL (312 aa)). Positions 124 to 158 (KEQIKCLNSKFAAFIDKVRFLEQQNKLLETKWQFY) are coil 1A. The tract at residues 159-168 (QNRKCCESNL) is linker 1. The tract at residues 169–269 (EPLFGGYIEA…YEEEVCVLQA (101 aa)) is coil 1B. Residue lysine 229 forms a Glycyl lysine isopeptide (Lys-Gly) (interchain with G-Cter in SUMO1) linkage. The interval 270 to 286 (HISDTSVIVKMDNSRDL) is linker 12. Residues 287 to 430 (NMDCVVAEIK…ATYRRLLEGE (144 aa)) are coil 2. Residues 431–507 (EQRLCEGVGS…CGSSRSVRFA (77 aa)) form a tail region.

Belongs to the intermediate filament family. Heterotetramer of two type I and two type II keratins.

In Mus musculus (Mouse), this protein is Keratin, type II cuticular Hb5 (Krt85).